Consider the following 70-residue polypeptide: Small ribosomal subunit protein bS21 (70 aa).

Belongs to the bacterial ribosomal protein bS21 family.

The sequence is that of Small ribosomal subunit protein bS21 from Nitratiruptor sp. (strain SB155-2).